The following is an 815-amino-acid chain: Ferripyoverdine receptor (815 aa).

A signal peptide spans 1 to 43 (MPAPHGLSPLSKAFLMRRAFQRRILPHSLAMALSLPLAGYVQA). Positions 161–271 (TPRETPQSIT…LGATINLIRK (111 aa)) constitute a TBDR plug domain. The TBDR beta-barrel domain maps to 276–815 (EFKGHVELGA…NLMFSTRWDF (540 aa)). A TonB C-terminal box motif is present at residues 798-815 (SASYGDPRNLMFSTRWDF).

It belongs to the TonB-dependent receptor family.

It is found in the cell outer membrane. In terms of biological role, receptor for the siderophore ferripyoverdine. The polypeptide is Ferripyoverdine receptor (fpvA) (Pseudomonas aeruginosa (strain ATCC 15692 / DSM 22644 / CIP 104116 / JCM 14847 / LMG 12228 / 1C / PRS 101 / PAO1)).